A 366-amino-acid chain; its full sequence is Variable large protein 10 (366 aa).

An N-terminal signal peptide occupies residues methionine 1–serine 18. The N-palmitoyl cysteine moiety is linked to residue cysteine 19. Cysteine 19 carries the S-diacylglycerol cysteine lipid modification.

The protein belongs to the variable large protein (Vlp) family. Beta subfamily.

The protein resides in the cell outer membrane. The Vlp and Vsp proteins are antigenically distinct proteins, only one vlp or vsp gene is transcriptionally active at any one time. Switching between these genes is a mechanism of host immune response evasion. This Borrelia hermsii protein is Variable large protein 10.